The primary structure comprises 454 residues: Nuclear distribution protein PAC1-1 (454 aa).

The 33-residue stretch at 9–41 (QAEELHRALIAYLSSNNLTSTAAALRAEIGLGE) folds into the LisH domain. A disordered region spans residues 71–93 (RHTSQLSNATPTSRQNKDPVNWL). A compositionally biased stretch (polar residues) spans 73–84 (TSQLSNATPTSR). 7 WD repeats span residues 104–145 (SHRQ…RTIK), 147–187 (HTKT…KNIR), 191–236 (GHDH…CVKT), 239–278 (GHAE…PEPK), 283–342 (GHEH…IKIL), 344–383 (GHDN…RCVK), and 388–450 (AHAH…LNVR).

The protein belongs to the WD repeat LIS1/nudF family. Self-associates. Interacts with NDL1 and dynein.

The protein resides in the cytoplasm. Its subcellular location is the cytoskeleton. It is found in the spindle pole. In terms of biological role, positively regulates the activity of the minus-end directed microtubule motor protein dynein. May enhance dynein-mediated microtubule sliding by targeting dynein to the microtubule plus end. Required for nuclear migration during vegetative growth as well as development. Required for retrograde early endosome (EE) transport from the hyphal tip. Required for localization of dynein to the mitotic spindle poles. Recruits additional proteins to the dynein complex at SPBs. In Chaetomium globosum (strain ATCC 6205 / CBS 148.51 / DSM 1962 / NBRC 6347 / NRRL 1970) (Soil fungus), this protein is Nuclear distribution protein PAC1-1.